A 365-amino-acid polypeptide reads, in one-letter code: Serpentine receptor class epsilon-21 (365 aa).

The next 7 membrane-spanning stretches (helical) occupy residues 49 to 69 (ILIN…VFCI), 82 to 102 (IIIS…FVFI), 116 to 136 (LLFW…HTLL), 158 to 178 (VWIA…YAFL), 189 to 209 (IFIV…IIYF), 250 to 270 (VVVV…PIIL), and 292 to 314 (PLVV…LSYY).

This sequence belongs to the nematode receptor-like protein sre family.

The protein localises to the membrane. The protein is Serpentine receptor class epsilon-21 (sre-21) of Caenorhabditis elegans.